A 275-amino-acid polypeptide reads, in one-letter code: NAD kinase (275 aa).

The active-site Proton acceptor is the Asp66. Residues 66–67 (DG), 138–139 (NE), His168, Asp170, 181–186 (TAYNLS), and Val205 each bind NAD(+).

The protein belongs to the NAD kinase family. The cofactor is a divalent metal cation.

The protein localises to the cytoplasm. The catalysed reaction is NAD(+) + ATP = ADP + NADP(+) + H(+). In terms of biological role, involved in the regulation of the intracellular balance of NAD and NADP, and is a key enzyme in the biosynthesis of NADP. Catalyzes specifically the phosphorylation on 2'-hydroxyl of the adenosine moiety of NAD to yield NADP. In Halorubrum lacusprofundi (strain ATCC 49239 / DSM 5036 / JCM 8891 / ACAM 34), this protein is NAD kinase.